The chain runs to 185 residues: Elongation factor P (185 aa).

This sequence belongs to the elongation factor P family.

It is found in the cytoplasm. It participates in protein biosynthesis; polypeptide chain elongation. Functionally, involved in peptide bond synthesis. Stimulates efficient translation and peptide-bond synthesis on native or reconstituted 70S ribosomes in vitro. Probably functions indirectly by altering the affinity of the ribosome for aminoacyl-tRNA, thus increasing their reactivity as acceptors for peptidyl transferase. This Methylobacillus flagellatus (strain ATCC 51484 / DSM 6875 / VKM B-1610 / KT) protein is Elongation factor P.